The primary structure comprises 238 residues: ATP synthase subunit a (238 aa).

The next 5 helical transmembrane spans lie at 18–38 (LTIL…VFWA), 75–95 (YSLL…LGLM), 112–132 (NFGV…IEGI), 179–199 (VVTG…PLAF), and 203–223 (IVWT…FIIL).

Belongs to the ATPase A chain family. F-type ATPases have 2 components, CF(1) - the catalytic core - and CF(0) - the membrane proton channel. CF(1) has five subunits: alpha(3), beta(3), gamma(1), delta(1), epsilon(1). CF(0) has three main subunits: a(1), b(2) and c(9-12). The alpha and beta chains form an alternating ring which encloses part of the gamma chain. CF(1) is attached to CF(0) by a central stalk formed by the gamma and epsilon chains, while a peripheral stalk is formed by the delta and b chains.

The protein resides in the cell membrane. Its function is as follows. Key component of the proton channel; it plays a direct role in the translocation of protons across the membrane. The protein is ATP synthase subunit a of Streptococcus agalactiae serotype III (strain NEM316).